The following is a 110-amino-acid chain: Small ribosomal subunit protein uS10m (110 aa).

This sequence belongs to the universal ribosomal protein uS10 family.

The protein localises to the mitochondrion. This Pisum sativum (Garden pea) protein is Small ribosomal subunit protein uS10m (RPS10).